Reading from the N-terminus, the 781-residue chain is Coiled-coil and C2 domain-containing protein 1-like (781 aa).

Disordered regions lie at residues 32–63, 94–134, 187–296, 313–373, and 403–447; these read MGRV…NVPG, ELNG…APNS, ESEI…AKES, CSAD…TEGN, and GELP…VEGK. The span at 37–59 shows a compositional bias: low complexity; it reads RPAAPARGAPPAARGRPAPAAPA. Gly residues predominate over residues 98-107; it reads LVGGGGGGGA. Low complexity predominate over residues 108–118; sequence APTVPTRAAPR. Pro residues-rich tracts occupy residues 119 to 129 and 204 to 222; these read APGPSGPPPSA and PLPP…PAPP. Over residues 244–256 the composition is skewed to low complexity; sequence APAPTAAAPPATK. The span at 269–280 shows a compositional bias: basic residues; that stretch reads ILHHRRDLHKQN. The span at 285–296 shows a compositional bias: basic and acidic residues; it reads IADKDKESAKES. Positions 324-341 are enriched in pro residues; that stretch reads PPSPPPYRKPAPPQPQAP. Positions 363–373 are enriched in basic and acidic residues; it reads KMAEKAKTEGN. A C2 domain is found at 605 to 741; sequence YEMRQIPSAD…EHSAEMEESL (137 aa).

Belongs to the CC2D1 family.

This is Coiled-coil and C2 domain-containing protein 1-like from Caenorhabditis elegans.